A 488-amino-acid chain; its full sequence is Probable malate:quinone oxidoreductase (488 aa).

The protein belongs to the MQO family. The cofactor is FAD.

It carries out the reaction (S)-malate + a quinone = a quinol + oxaloacetate. Its pathway is carbohydrate metabolism; tricarboxylic acid cycle; oxaloacetate from (S)-malate (quinone route): step 1/1. In Neisseria meningitidis serogroup B (strain ATCC BAA-335 / MC58), this protein is Probable malate:quinone oxidoreductase.